A 37-amino-acid polypeptide reads, in one-letter code: Mu-agatoxin-Aa1f (37 aa).

4 cysteine pairs are disulfide-bonded: Cys2–Cys18, Cys9–Cys23, Cys17–Cys33, and Cys25–Cys31. Residue Asn37 is modified to Asparagine amide.

It belongs to the neurotoxin 07 (Beta/delta-agtx) family. 03 (aga-4) subfamily. Aga sub-subfamily. As to expression, expressed by the venom gland.

It is found in the secreted. Functionally, insecticidal neurotoxin that induces an irreversible spastic paralysis when injected into insects. Modifies presynaptic voltage-gated sodium channels (Nav), causing them to open at the normal resting potential of the nerve. This leads to spontaneous release of neurotransmitter and repetitive action potentials in motor neurons. The polypeptide is Mu-agatoxin-Aa1f (Agelenopsis aperta (North American funnel-web spider)).